The following is a 443-amino-acid chain: ATP-dependent protease ATPase subunit HslU (443 aa).

Residues isoleucine 18, 60 to 65 (GVGKTE), aspartate 256, glutamate 321, and arginine 393 each bind ATP.

The protein belongs to the ClpX chaperone family. HslU subfamily. As to quaternary structure, a double ring-shaped homohexamer of HslV is capped on each side by a ring-shaped HslU homohexamer. The assembly of the HslU/HslV complex is dependent on binding of ATP.

The protein localises to the cytoplasm. Functionally, ATPase subunit of a proteasome-like degradation complex; this subunit has chaperone activity. The binding of ATP and its subsequent hydrolysis by HslU are essential for unfolding of protein substrates subsequently hydrolyzed by HslV. HslU recognizes the N-terminal part of its protein substrates and unfolds these before they are guided to HslV for hydrolysis. This is ATP-dependent protease ATPase subunit HslU from Salmonella agona (strain SL483).